We begin with the raw amino-acid sequence, 246 residues long: PARP-type zinc finger-containing protein C2A9.07c (246 aa).

Residues 8–99 (YRVELAKTGR…EKILRAFEQG (92 aa)) form a PARP-type; degenerate zinc finger. The span at 103–126 (EEDEERCRKMASDASEEKDRKIEE) shows a compositional bias: basic and acidic residues. Residues 103 to 246 (EEDEERCRKM…ESGNEYSDSD (144 aa)) form a disordered region. The residue at position 130 (T130) is a Phosphothreonine. Phosphoserine is present on S131. The span at 157–168 (NKKHKAERKRSP) shows a compositional bias: basic residues. Residues 175 to 184 (LEDDEEIEDV) are compositionally biased toward acidic residues. The span at 185 to 196 (ASDKDEEEKPWS) shows a compositional bias: basic and acidic residues. Positions 197–215 (GDEEDDDELVVKDSEDETE) are enriched in acidic residues. Phosphoserine is present on residues S243 and S245.

Its subcellular location is the nucleus. The protein resides in the mitochondrion. The chain is PARP-type zinc finger-containing protein C2A9.07c from Schizosaccharomyces pombe (strain 972 / ATCC 24843) (Fission yeast).